The chain runs to 634 residues: 1-deoxy-D-xylulose-5-phosphate synthase (634 aa).

Thiamine diphosphate is bound by residues histidine 77 and 118-120; that span reads GHA. Residue aspartate 149 participates in Mg(2+) binding. Thiamine diphosphate contacts are provided by residues 150 to 151, asparagine 178, tyrosine 289, and glutamate 371; that span reads AS. Mg(2+) is bound at residue asparagine 178.

This sequence belongs to the transketolase family. DXPS subfamily. In terms of assembly, homodimer. The cofactor is Mg(2+). Requires thiamine diphosphate as cofactor.

The enzyme catalyses D-glyceraldehyde 3-phosphate + pyruvate + H(+) = 1-deoxy-D-xylulose 5-phosphate + CO2. It functions in the pathway metabolic intermediate biosynthesis; 1-deoxy-D-xylulose 5-phosphate biosynthesis; 1-deoxy-D-xylulose 5-phosphate from D-glyceraldehyde 3-phosphate and pyruvate: step 1/1. Functionally, catalyzes the acyloin condensation reaction between C atoms 2 and 3 of pyruvate and glyceraldehyde 3-phosphate to yield 1-deoxy-D-xylulose-5-phosphate (DXP). The polypeptide is 1-deoxy-D-xylulose-5-phosphate synthase (Leptospira interrogans serogroup Icterohaemorrhagiae serovar copenhageni (strain Fiocruz L1-130)).